Consider the following 551-residue polypeptide: MKAWLLVSSLCLSTFIAALEQTIISTAAESISRSLHTTELEFTWIGTAYLLPAAASTPPWGKLSDIFGRKPVLMISIVVFFIGSLIGALAINIDMLIAGRVIQGTGGGGILGLSATVIGDVFSPRERSKYYGVLGVTWGVACGLGPIVGGAFCQYVSWRWCFWINRTSLPQSSPNPLNLTTSVPVAGVAGALVLLFLEVHTPRTPIIEGLLAMDWLGTITIVGATVMFLLGLGYGGIAYPWNSATVVCLIVFGIGDNRRLRPDRMEGRQVLDHAAAPVQIPPPISPPSASAYIHGLRLHRPTLYYPPAVLSRSCSAPPRSLSGVYLLPVAVTLCVASTATGLYISHSGRYRPPIYFGLVMMILGHGLYINLQPYASWARIIIFQIIAGLGLGPLFQAPIIAIFSLTKPADTASAAATVFFARDIATAMSIVFGGVIFQNRIRAFKSDIEGVVSPELTELITSGGATTASDQIRALPAAARSLVRDRYNTALRSEWIFYTALSGAALLLSVFISKQVLSRDHKMNKTGLDVQEASRLEELEKEKKAAATDAV.

Positions 1–18 are cleaved as a signal peptide; the sequence is MKAWLLVSSLCLSTFIAA. Helical transmembrane passes span 40 to 60, 71 to 91, 102 to 122, and 132 to 152; these read LEFT…TPPW, PVLM…ALAI, IQGT…GDVF, and GVLG…GGAF. N-linked (GlcNAc...) asparagine glycosylation is found at N165 and N178. The next 8 helical transmembrane spans lie at 179 to 199, 206 to 228, 233 to 255, 324 to 344, 354 to 374, 380 to 400, 417 to 437, and 493 to 513; these read LTTS…FLEV, IIEG…TVMF, GYGG…FGIG, VYLL…GLYI, IYFG…LQPY, IIIF…APII, TVFF…GVIF, and SEWI…VFIS. N524 carries N-linked (GlcNAc...) asparagine glycosylation.

The protein belongs to the major facilitator superfamily. TCR/Tet family.

The protein resides in the membrane. Its function is as follows. MFS-type transporter; part of the gene cluster that mediates the biosynthesis of isoflavipucine. This chain is MFS-type transporter ATEG_00331, found in Aspergillus terreus (strain NIH 2624 / FGSC A1156).